The following is a 356-amino-acid chain: NADH-quinone oxidoreductase subunit H (356 aa).

The next 8 helical transmembrane spans lie at 4–24, 79–99, 127–147, 166–186, 198–218, 251–271, 289–309, and 329–349; these read ALIL…LTGV, LLAP…IPFG, GVLY…IAGW, ISYE…TGSL, MWNI…TAMF, FFLA…LLFF, FIGL…FIWV, and MIPW…YWKE.

Belongs to the complex I subunit 1 family. NDH-1 is composed of 14 different subunits. Subunits NuoA, H, J, K, L, M, N constitute the membrane sector of the complex.

Its subcellular location is the cell inner membrane. It catalyses the reaction a quinone + NADH + 5 H(+)(in) = a quinol + NAD(+) + 4 H(+)(out). In terms of biological role, NDH-1 shuttles electrons from NADH, via FMN and iron-sulfur (Fe-S) centers, to quinones in the respiratory chain. The immediate electron acceptor for the enzyme in this species is believed to be ubiquinone. Couples the redox reaction to proton translocation (for every two electrons transferred, four hydrogen ions are translocated across the cytoplasmic membrane), and thus conserves the redox energy in a proton gradient. This subunit may bind ubiquinone. This chain is NADH-quinone oxidoreductase subunit H, found in Leptospira biflexa serovar Patoc (strain Patoc 1 / ATCC 23582 / Paris).